A 492-amino-acid chain; its full sequence is MQSNTDSSGTSGTYSQTVGLLYVFNLIVGTGALALPKAFQSAGWLLSISLLTFSAFMSYVAATFVIEALSVANAVLSKKRRVEYDDVVVADGPSTFEIAKKVEVSEMASMFLSKVSLVFSYFAIIIYLFGDLAIYSTTVPKSAMNIVCSTINATIVKSSDPCHESWPEILTRMTVYRFFVIVFVVVVCLPMVIAGITKTRHIQIMTTLSRWAAFILMISLATMQLSSQGAAAHPPAYNFHGFGSLFGCAVYAFMCHHSIPSLITPMRTKENVFGKIAVVYGIVGVFYFTLSLTGAFAFEHVQDIYTLNFLHDDNTSLVYSIIDYFLALFPIITLTSSYPIIALTLINNFKVVKDILCPKTGQENESLLEADNQVEDNDTDDEREARNGNPKTIFDVLVPTLVLALPTFLSLLTDDMLLLASITGSFPGVAVQFAIPCLLVTAARKHARSVLNFPVPRKNNSPFQSRFWIMLISSWAGFSMIMVLLNLVGVKF.

The Cytoplasmic portion of the chain corresponds to 1–18; the sequence is MQSNTDSSGTSGTYSQTV. Residues 19–39 form a helical membrane-spanning segment; sequence GLLYVFNLIVGTGALALPKAF. Residues 40-45 lie on the Extracellular side of the membrane; the sequence is QSAGWL. A helical membrane pass occupies residues 46–66; sequence LSISLLTFSAFMSYVAATFVI. Residues 67-114 are Cytoplasmic-facing; the sequence is EALSVANAVLSKKRRVEYDDVVVADGPSTFEIAKKVEVSEMASMFLSK. The chain crosses the membrane as a helical span at residues 115 to 135; it reads VSLVFSYFAIIIYLFGDLAIY. Topologically, residues 136–177 are extracellular; it reads STTVPKSAMNIVCSTINATIVKSSDPCHESWPEILTRMTVYR. Asn152 is a glycosylation site (N-linked (GlcNAc...) asparagine). A helical transmembrane segment spans residues 178-198; it reads FFVIVFVVVVCLPMVIAGITK. At 199-210 the chain is on the cytoplasmic side; it reads TRHIQIMTTLSR. The chain crosses the membrane as a helical span at residues 211-231; it reads WAAFILMISLATMQLSSQGAA. Over 232–238 the chain is Extracellular; sequence AHPPAYN. Residues 239 to 259 traverse the membrane as a helical segment; sequence FHGFGSLFGCAVYAFMCHHSI. Over 260 to 275 the chain is Cytoplasmic; the sequence is PSLITPMRTKENVFGK. The helical transmembrane segment at 276 to 296 threads the bilayer; it reads IAVVYGIVGVFYFTLSLTGAF. The Extracellular segment spans residues 297-325; the sequence is AFEHVQDIYTLNFLHDDNTSLVYSIIDYF. Residue Asn314 is glycosylated (N-linked (GlcNAc...) asparagine). Residues 326–346 form a helical membrane-spanning segment; sequence LALFPIITLTSSYPIIALTLI. Residues 347 to 391 are Cytoplasmic-facing; it reads NNFKVVKDILCPKTGQENESLLEADNQVEDNDTDDEREARNGNPK. Residues 367–382 show a composition bias toward acidic residues; the sequence is LLEADNQVEDNDTDDE. Residues 367-387 are disordered; the sequence is LLEADNQVEDNDTDDEREARN. Residues 392-412 traverse the membrane as a helical segment; sequence TIFDVLVPTLVLALPTFLSLL. The Extracellular segment spans residues 413–415; sequence TDD. A helical transmembrane segment spans residues 416–436; it reads MLLLASITGSFPGVAVQFAIP. Residues 437 to 466 lie on the Cytoplasmic side of the membrane; sequence CLLVTAARKHARSVLNFPVPRKNNSPFQSR. The helical transmembrane segment at 467–487 threads the bilayer; it reads FWIMLISSWAGFSMIMVLLNL. The Extracellular segment spans residues 488 to 492; sequence VGVKF.

It belongs to the TMEM104 family.

It localises to the membrane. The polypeptide is Transmembrane protein 104 homolog (Caenorhabditis briggsae).